The chain runs to 257 residues: Ethanolamine ammonia-lyase small subunit (257 aa).

3 residues coordinate adenosylcob(III)alamin: Val-153, Glu-174, and Cys-203.

Belongs to the EutC family. As to quaternary structure, the basic unit is a heterodimer which dimerizes to form tetramers. The heterotetramers trimerize; 6 large subunits form a core ring with 6 small subunits projecting outwards. Adenosylcob(III)alamin serves as cofactor.

Its subcellular location is the bacterial microcompartment. The catalysed reaction is ethanolamine = acetaldehyde + NH4(+). The protein operates within amine and polyamine degradation; ethanolamine degradation. Its function is as follows. Catalyzes the deamination of various vicinal amino-alcohols to oxo compounds. Allows this organism to utilize ethanolamine as the sole source of nitrogen and carbon in the presence of external vitamin B12. The protein is Ethanolamine ammonia-lyase small subunit of Rhodococcus erythropolis (Arthrobacter picolinophilus).